The following is a 281-amino-acid chain: AB hydrolase superfamily protein YclE (281 aa).

Residues 30 to 268 (SAVYYPRLFS…SGHQPMLEEP (239 aa)) form the AB hydrolase-1 domain. Ser95 serves as the catalytic Nucleophile. Residue Asp232 is part of the active site. His261 functions as the Proton donor in the catalytic mechanism.

Belongs to the AB hydrolase superfamily.

This chain is AB hydrolase superfamily protein YclE (yclE), found in Bacillus subtilis (strain 168).